Reading from the N-terminus, the 104-residue chain is Intracellular chorismate mutase (104 aa).

A Chorismate mutase domain is found at 23 to 104 (AVPEIDDLRR…LRLGRGRLGY (82 aa)). Chorismate-binding residues include Arg59, Val68, and Glu72.

Homodimer. Probably interacts with AroG (MSMEG_4244).

The protein resides in the cytoplasm. The catalysed reaction is chorismate = prephenate. The protein operates within metabolic intermediate biosynthesis; prephenate biosynthesis; prephenate from chorismate: step 1/1. Its activity is regulated as follows. The formation of the complex with AroG activates the chorismate mutase activity. Catalyzes the Claisen rearrangement of chorismate to prephenate. Probably involved in the aromatic amino acid biosynthesis. The protein is Intracellular chorismate mutase of Mycolicibacterium smegmatis (strain ATCC 700084 / mc(2)155) (Mycobacterium smegmatis).